A 313-amino-acid chain; its full sequence is Glyoxylate/hydroxypyruvate reductase A HPR2 (313 aa).

Residues 152-155 (LGRI), 174-176 (SRT), 230-232 (IGR), and Asp256 each bind NADP(+). Arg232 is a catalytic residue. Glu261 is a catalytic residue. His279 functions as the Proton donor in the catalytic mechanism. Residue 279-281 (HVG) coordinates NADP(+).

Belongs to the D-isomer specific 2-hydroxyacid dehydrogenase family. GyaR subfamily. As to quaternary structure, homodimer.

The protein localises to the cytoplasm. The catalysed reaction is glycolate + NADP(+) = glyoxylate + NADPH + H(+). It carries out the reaction (R)-glycerate + NAD(+) = 3-hydroxypyruvate + NADH + H(+). It catalyses the reaction (R)-glycerate + NADP(+) = 3-hydroxypyruvate + NADPH + H(+). With respect to regulation, strongly inhibited by oxalate. Functionally, catalyzes the NADPH-dependent reduction of glyoxylate and hydroxypyruvate (HP) into glycolate and glycerate in the cytoplasm, thus providing a cytosolic bypass to the photorespiratory core cycle. Mostly active in the presence of NADPH and hydroxypyruvate. This Arabidopsis thaliana (Mouse-ear cress) protein is Glyoxylate/hydroxypyruvate reductase A HPR2 (HPR2).